We begin with the raw amino-acid sequence, 204 residues long: Large ribosomal subunit protein uL4 (204 aa).

The disordered stretch occupies residues T49–S75.

This sequence belongs to the universal ribosomal protein uL4 family. In terms of assembly, part of the 50S ribosomal subunit.

In terms of biological role, one of the primary rRNA binding proteins, this protein initially binds near the 5'-end of the 23S rRNA. It is important during the early stages of 50S assembly. It makes multiple contacts with different domains of the 23S rRNA in the assembled 50S subunit and ribosome. Functionally, forms part of the polypeptide exit tunnel. The chain is Large ribosomal subunit protein uL4 from Campylobacter jejuni (strain RM1221).